A 329-amino-acid polypeptide reads, in one-letter code: MAP kinase-activated protein kinase 2 (329 aa).

ATP contacts are provided by residues 1–7 and lysine 22; that span reads LGINGKV. The region spanning 1–254 is the Protein kinase domain; the sequence is LGINGKVLRI…ITEFMNHPWI (254 aa). A staurosporine-binding site is contributed by 68–70; that stretch reads ECL. The active-site Proton acceptor is the aspartate 115. The residue at position 151 (threonine 151) is a Phosphothreonine; by MAPK14. Serine 201 bears the Phosphoserine; by MAPK14 mark. At serine 257 the chain carries Phosphoserine; by autocatalysis. Residues 257–293 are autoinhibitory helix; it reads STKVPQTPLHTSRVLKEDKERWEDVKEEMTSALATMR. At threonine 263 the chain carries Phosphothreonine; by MAPK14. A Glycyl lysine isopeptide (Lys-Gly) (interchain with G-Cter in SUMO) cross-link involves residue lysine 282. Residues 285-294 carry the Nuclear export signal (NES) motif; sequence MTSALATMRV. The interval 295–319 is p38 MAPK-binding site; sequence DYEQIKIKKIEDASNPLLLKRRKKA. 2 consecutive short sequence motifs (bipartite nuclear localization signal) follow at residues 300–303 and 314–318; these read KIKK and KRRKK.

Belongs to the protein kinase superfamily. CAMK Ser/Thr protein kinase family. Heterodimer with p38-alpha/MAPK14; this heterodimer forms a stable complex: molecules are positioned 'face to face' so that the ATP-binding sites of both kinases are at the heterodimer interface. Interacts with PHC2. Interacts with HSF1. Post-translationally, sumoylation inhibits the protein kinase activity. In terms of processing, phosphorylated and activated by MAP kinase p38-alpha/MAPK14 at Thr-151, Ser-201 and Thr-263.

Its subcellular location is the cytoplasm. The protein resides in the nucleus. It carries out the reaction L-seryl-[protein] + ATP = O-phospho-L-seryl-[protein] + ADP + H(+). It catalyses the reaction L-threonyl-[protein] + ATP = O-phospho-L-threonyl-[protein] + ADP + H(+). With respect to regulation, activated following phosphorylation by p38-alpha/MAPK14 following various stresses. Inhibited following sumoylation. Specifically inhibited by pyrrolopyridine inhibitors. Its function is as follows. Stress-activated serine/threonine-protein kinase involved in cytokine production, endocytosis, reorganization of the cytoskeleton, cell migration, cell cycle control, chromatin remodeling, DNA damage response and transcriptional regulation. Following stress, it is phosphorylated and activated by MAP kinase p38-alpha/MAPK14, leading to phosphorylation of substrates. Phosphorylates serine in the peptide sequence, Hyd-X-R-X(2)-S, where Hyd is a large hydrophobic residue. Phosphorylates ALOX5, CDC25B, CDC25C, CEP131, ELAVL1, HNRNPA0, HSP27/HSPB1, KRT18, KRT20, LIMK1, LSP1, PABPC1, PARN, PDE4A, RCSD1, RPS6KA3, TAB3 and TTP/ZFP36. Phosphorylates HSF1; leading to the interaction with HSP90 proteins and inhibiting HSF1 homotrimerization, DNA-binding and transactivation activities. Mediates phosphorylation of HSP27/HSPB1 in response to stress, leading to the dissociation of HSP27/HSPB1 from large small heat-shock protein (sHsps) oligomers and impairment of their chaperone activities and ability to protect against oxidative stress effectively. Involved in inflammatory response by regulating tumor necrosis factor (TNF) and IL6 production post-transcriptionally: acts by phosphorylating AU-rich elements (AREs)-binding proteins ELAVL1, HNRNPA0, PABPC1 and TTP/ZFP36, leading to regulation of the stability and translation of TNF and IL6 mRNAs. Phosphorylation of TTP/ZFP36, a major post-transcriptional regulator of TNF, promotes its binding to 14-3-3 proteins and reduces its ARE mRNA affinity, leading to inhibition of dependent degradation of ARE-containing transcripts. Phosphorylates CEP131 in response to cellular stress following ultraviolet irradiation which promotes binding of CEP131 to 14-3-3 proteins and inhibits formation of novel centriolar satellites. Also involved in late G2/M checkpoint following DNA damage through a process of post-transcriptional mRNA stabilization: following DNA damage, relocalizes from nucleus to cytoplasm and phosphorylates HNRNPA0 and PARN, leading to stabilization of GADD45A mRNA. Involved in toll-like receptor signaling pathway (TLR) in dendritic cells: required for acute TLR-induced macropinocytosis by phosphorylating and activating RPS6KA3. The polypeptide is MAP kinase-activated protein kinase 2 (MAPKAPK2) (Cricetulus longicaudatus (Long-tailed dwarf hamster)).